Reading from the N-terminus, the 1062-residue chain is NACHT, LRR and PYD domains-containing protein 2 (1062 aa).

The Pyrin domain maps to 1-94; that stretch reads MVSSAQMGFN…SERAKDEVRE (94 aa). The 320-residue stretch at 207–526 folds into the NACHT domain; it reads YTVVLYGPAG…LEKEEEEDRD (320 aa). ATP is bound at residue 213-220; that stretch reads GPAGLGKT. A Phosphoserine modification is found at Ser-671. LRR repeat units follow at residues 812-832, 841-861, 869-889, 898-918, 926-946, 955-976, 983-1003, and 1010-1033; these read SLTC…KLLY, FLQR…KDLA, ELTH…KFLC, KLQT…CDLT, SLLC…KFLC, NLRC…DLCS, SLVT…KMLF, and SGTL…LLEE.

The protein belongs to the NLRP family. Interacts with CHUK. Interacts with IKBKB. Interacts with IKBKG. Interacts with MEFV. Interacts with PYCARD. Interacts (via pyrin domain) with PYDC2. Interacts with CARD8. In terms of tissue distribution, expressed at high levels in lung, placenta and thymus and at lower levels in ovary, intestine and brain. Highly abundant in oocytes and early embryos, however poorly expressed in somatic tissues such as brain, kidney, liver and spinal cord.

The protein localises to the cytoplasm. Functionally, suppresses TNF- and CD40-induced NFKB1 activity at the level of the IKK complex, by inhibiting NFKBIA degradation induced by TNF. When associated with PYCARD, activates CASP1, leading to the secretion of mature pro-inflammatory cytokine IL1B. May be a component of the inflammasome, a protein complex which also includes PYCARD, CARD8 and CASP1 and whose function would be the activation of pro-inflammatory caspases. The polypeptide is NACHT, LRR and PYD domains-containing protein 2 (NLRP2) (Homo sapiens (Human)).